Consider the following 283-residue polypeptide: Thymidylate synthase (283 aa).

R33 contributes to the dUMP binding site. H63 contributes to the (6R)-5,10-methylene-5,6,7,8-tetrahydrofolate binding site. 138 to 139 (RR) provides a ligand contact to dUMP. Residue C158 is the Nucleophile of the active site. DUMP contacts are provided by residues 185-188 (RSAD), N196, and 226-228 (HIY). D188 is a (6R)-5,10-methylene-5,6,7,8-tetrahydrofolate binding site. A282 contributes to the (6R)-5,10-methylene-5,6,7,8-tetrahydrofolate binding site.

This sequence belongs to the thymidylate synthase family. Bacterial-type ThyA subfamily. Homodimer.

Its subcellular location is the cytoplasm. The catalysed reaction is dUMP + (6R)-5,10-methylene-5,6,7,8-tetrahydrofolate = 7,8-dihydrofolate + dTMP. Its pathway is pyrimidine metabolism; dTTP biosynthesis. Functionally, catalyzes the reductive methylation of 2'-deoxyuridine-5'-monophosphate (dUMP) to 2'-deoxythymidine-5'-monophosphate (dTMP) while utilizing 5,10-methylenetetrahydrofolate (mTHF) as the methyl donor and reductant in the reaction, yielding dihydrofolate (DHF) as a by-product. This enzymatic reaction provides an intracellular de novo source of dTMP, an essential precursor for DNA biosynthesis. This is Thymidylate synthase from Methylibium petroleiphilum (strain ATCC BAA-1232 / LMG 22953 / PM1).